The chain runs to 454 residues: Neuronal acetylcholine receptor subunit alpha-5 (454 aa).

The segment at Met-1–Pro-26 is disordered. The N-terminal stretch at Met-1–Val-29 is a signal peptide. Residues Pro-10–Gly-22 are compositionally biased toward low complexity. The Extracellular portion of the chain corresponds to Ala-30 to Thr-240. Residues Asn-55, Asn-169, and Asn-215 are each glycosylated (N-linked (GlcNAc...) asparagine). A disulfide bond links Cys-156 and Cys-170. A disulfide bridge links Cys-220 with Cys-221. A run of 3 helical transmembrane segments spans residues Leu-241 to Pro-261, Leu-270 to Pro-290, and Leu-303 to Ile-323. The Cytoplasmic segment spans residues His-324–Met-416. Residues Phe-417–Ile-437 traverse the membrane as a helical segment. Topologically, residues His-438 to Thr-454 are extracellular.

This sequence belongs to the ligand-gated ion channel (TC 1.A.9) family. Acetylcholine receptor (TC 1.A.9.1) subfamily. Alpha-5/CHRNA5 sub-subfamily. In terms of assembly, neuronal AChR that forms heteropentamers composed of two different type of subunits: alpha and non-alpha (beta). CHRNA5/alpha-5 subunit is only able to form functional nAChRs when co-assembled with another alpha subunit, can be combined to CHRNA4/alpha-4 or CHRNA3/alpha-3 and CHRNB4/beta-4 or CHRNB2/beta-2 to give rise to functional receptors. Interacts with LYPD6.

The protein resides in the synaptic cell membrane. It localises to the cell membrane. The catalysed reaction is Ca(2+)(in) = Ca(2+)(out). It carries out the reaction K(+)(in) = K(+)(out). It catalyses the reaction Na(+)(in) = Na(+)(out). Its activity is regulated as follows. Activated by a myriad of ligands such as acetylcholine, cytisine, nicotine, choline and epibatidine. In terms of biological role, component of neuronal acetylcholine receptors (nAChRs) that function as pentameric, ligand-gated cation channels with high calcium permeability among other activities. nAChRs are excitatory neurotrasnmitter receptors formed by a collection of nAChR subunits known to mediate synaptic transmission in the nervous system and the neuromuscular junction. Each nAchR subunit confers differential attributes to channel properties, including activation, deactivation and desensitization kinetics, pH sensitivity, cation permeability, and binding to allosteric modulators. Has an accessory rather than functional role and is only able to form functional nAChRs when co-assembled with another beta subunit. Participates in pentameric assemblies along with CHRNA3, CHRNA4, CHRNB2 and CHRNB4. Increases receptor sensitivity to acetylcholine and nicotine when associated with CHRNA4 and CHRNB2. Plays a role in nicotine addiction. The polypeptide is Neuronal acetylcholine receptor subunit alpha-5 (CHRNA5) (Gallus gallus (Chicken)).